Reading from the N-terminus, the 2353-residue chain is Otogelin-like protein (2353 aa).

The first 31 residues, 1-31 (MNIVRKLNLMIPWSIFLLHVLLFSLQEYICA), serve as a signal peptide directing secretion. The region spanning 121–297 (GICKTWGQYH…VQTPDDTKCV (177 aa)) is the VWFD 1 domain. 2 disulfides stabilise this stretch: Cys-123/Cys-257 and Cys-145/Cys-296. A glycan (N-linked (GlcNAc...) asparagine) is linked at Asn-144. A TIL 1 domain is found at 390 to 443 (CDDSFVHRDCISCCPPTCTFEKQCLGSNLHCLDGCYCPDGLVMDNGTCISLENC). N-linked (GlcNAc...) asparagine glycosylation is found at Asn-434 and Asn-473. Residues 481–654 (VQCSVVGDSH…NAWRVSSTCF (174 aa)) enclose the VWFD 2 domain. 3 disulfides stabilise this stretch: Cys-483-Cys-618, Cys-505-Cys-653, and Cys-527-Cys-535. The TIL 2 domain maps to 745 to 800 (CQKGMLYHHCSSFCLHSCISLSSPEQCSDDCAEGCNCPEGKFYEDTLNFCVPIFHC). Residues Asn-826 and Asn-876 are each glycosylated (N-linked (GlcNAc...) asparagine). Residues 946–1115 (AVCTIYGDRH…SWALGQCESP (170 aa)) enclose the VWFD 3 domain. 2 disulfides stabilise this stretch: Cys-948–Cys-1078 and Cys-992–Cys-999. N-linked (GlcNAc...) asparagine glycosylation is found at Asn-1289, Asn-1604, and Asn-2198. The VWFD 4 domain occupies 1534 to 1723 (CRCSMLSELS…SWEIEKSFEV (190 aa)). Cys-1536 and Cys-1683 are joined by a disulfide. 4 disulfides stabilise this stretch: Cys-2261–Cys-2317, Cys-2282–Cys-2331, Cys-2293–Cys-2348, and Cys-2297–Cys-2350. The region spanning 2261–2353 (CKREERICQK…EPIDCTCQWN (93 aa)) is the CTCK domain.

It belongs to the otogelin family. Expressed at high levels in fetal inner ear and heart. Low levels in fetal skeletal muscle, kidney, spleen and colon. Not detected in fetal liver, lung, brain, nor in fetal stomach. In adult tissues, highest levels in brain, kidney, heart and retina. Relatively low levels in lung, spleen and duodenum. Not detected in adult skeletal muscle, liver, nor testis.

The protein resides in the secreted. The polypeptide is Otogelin-like protein (OTOGL) (Homo sapiens (Human)).